We begin with the raw amino-acid sequence, 364 residues long: Methylthioribose-1-phosphate isomerase (364 aa).

Substrate is bound by residues 46–48 (RGA), Arg89, and Gln196. The active-site Proton donor is Asp237. Residue 247-248 (NK) participates in substrate binding.

This sequence belongs to the eIF-2B alpha/beta/delta subunits family. MtnA subfamily.

The catalysed reaction is 5-(methylsulfanyl)-alpha-D-ribose 1-phosphate = 5-(methylsulfanyl)-D-ribulose 1-phosphate. It functions in the pathway amino-acid biosynthesis; L-methionine biosynthesis via salvage pathway; L-methionine from S-methyl-5-thio-alpha-D-ribose 1-phosphate: step 1/6. Its function is as follows. Catalyzes the interconversion of methylthioribose-1-phosphate (MTR-1-P) into methylthioribulose-1-phosphate (MTRu-1-P). In Pelotomaculum thermopropionicum (strain DSM 13744 / JCM 10971 / SI), this protein is Methylthioribose-1-phosphate isomerase.